A 635-amino-acid chain; its full sequence is ATP-binding protein Uup (635 aa).

ABC transporter domains follow at residues methionine 1–glutamate 253 and phenylalanine 320–glutamate 546. Residues glycine 36 to serine 43 and glycine 352 to threonine 359 each bind ATP. The tract at residues lysine 551 to glycine 635 is C-terminal domain (CTD), binds DNA, required to complement a deletion mutant. A coiled-coil region spans residues serine 563–leucine 631.

Belongs to the ABC transporter superfamily. ABCF family. Uup subfamily.

It is found in the cytoplasm. The catalysed reaction is ATP + H2O = ADP + phosphate + H(+). Its activity is regulated as follows. ATPase activity inhibited by N-ethylmaleimide but not by vanadate. Its function is as follows. Probably plays a role in ribosome assembly or function; overexpression suppresses cold-sensitive growth of a bipA deletion. May be involved in resolution of branched DNA intermediates that result from template switching in postreplication gaps. Binds DNA at Holliday junctions. May be involved in the correct segregation of nucleoids. Has ATPase activity, binds DNA non-sequence specifically; the presence of DNA does not change the ATPase activity. Mutations in this gene cause an increase in RecA-independent precise excision of transposons and insertion elements, and also reduce bacteriophage Mu growth. Genetic interactions among priB, dam, lexA, nagC, polA, rdgB, rdgB, rep and uup link the PriA-PriB replication restart pathway to DNA double-strand break repair. The chain is ATP-binding protein Uup from Escherichia coli (strain K12).